The following is a 319-amino-acid chain: Aspartate carbamoyltransferase catalytic subunit (319 aa).

Arginine 57 and threonine 58 together coordinate carbamoyl phosphate. Lysine 85 serves as a coordination point for L-aspartate. 3 residues coordinate carbamoyl phosphate: arginine 107, histidine 140, and glutamine 143. L-aspartate-binding residues include arginine 173 and arginine 227. Residues glycine 268 and proline 269 each contribute to the carbamoyl phosphate site.

Belongs to the aspartate/ornithine carbamoyltransferase superfamily. ATCase family. As to quaternary structure, heterododecamer (2C3:3R2) of six catalytic PyrB chains organized as two trimers (C3), and six regulatory PyrI chains organized as three dimers (R2).

It catalyses the reaction carbamoyl phosphate + L-aspartate = N-carbamoyl-L-aspartate + phosphate + H(+). Its pathway is pyrimidine metabolism; UMP biosynthesis via de novo pathway; (S)-dihydroorotate from bicarbonate: step 2/3. Functionally, catalyzes the condensation of carbamoyl phosphate and aspartate to form carbamoyl aspartate and inorganic phosphate, the committed step in the de novo pyrimidine nucleotide biosynthesis pathway. This chain is Aspartate carbamoyltransferase catalytic subunit, found in Mycobacterium tuberculosis (strain ATCC 25177 / H37Ra).